The primary structure comprises 375 residues: UDP-N-acetylglucosamine--N-acetylmuramyl-(pentapeptide) pyrophosphoryl-undecaprenol N-acetylglucosamine transferase (375 aa).

UDP-N-acetyl-alpha-D-glucosamine-binding positions include 13–15, asparagine 124, arginine 165, serine 193, and glutamine 294; that span reads TGG.

It belongs to the glycosyltransferase 28 family. MurG subfamily.

Its subcellular location is the cell inner membrane. It carries out the reaction di-trans,octa-cis-undecaprenyl diphospho-N-acetyl-alpha-D-muramoyl-L-alanyl-D-glutamyl-meso-2,6-diaminopimeloyl-D-alanyl-D-alanine + UDP-N-acetyl-alpha-D-glucosamine = di-trans,octa-cis-undecaprenyl diphospho-[N-acetyl-alpha-D-glucosaminyl-(1-&gt;4)]-N-acetyl-alpha-D-muramoyl-L-alanyl-D-glutamyl-meso-2,6-diaminopimeloyl-D-alanyl-D-alanine + UDP + H(+). It participates in cell wall biogenesis; peptidoglycan biosynthesis. Its function is as follows. Cell wall formation. Catalyzes the transfer of a GlcNAc subunit on undecaprenyl-pyrophosphoryl-MurNAc-pentapeptide (lipid intermediate I) to form undecaprenyl-pyrophosphoryl-MurNAc-(pentapeptide)GlcNAc (lipid intermediate II). This is UDP-N-acetylglucosamine--N-acetylmuramyl-(pentapeptide) pyrophosphoryl-undecaprenol N-acetylglucosamine transferase from Chelativorans sp. (strain BNC1).